A 507-amino-acid chain; its full sequence is RNA-splicing ligase RtcB homolog (507 aa).

Mn(2+) contacts are provided by Asp121, Cys124, His229, His261, and His355. Position 228–232 (228–232) interacts with GMP; it reads NHYAE. Residues 355-356, 404-407, Ser411, 430-433, and Lys506 each bind GMP; these read HN, GGTM, and HGAG. Residue His430 is the GMP-histidine intermediate of the active site.

It belongs to the RtcB family. As to quaternary structure, catalytic component of the tRNA-splicing ligase complex. Mn(2+) is required as a cofactor.

The enzyme catalyses a 3'-end 3'-phospho-ribonucleotide-RNA + a 5'-end dephospho-ribonucleoside-RNA + GTP = a ribonucleotidyl-ribonucleotide-RNA + GMP + diphosphate. It catalyses the reaction a 3'-end 2',3'-cyclophospho-ribonucleotide-RNA + a 5'-end dephospho-ribonucleoside-RNA + GTP + H2O = a ribonucleotidyl-ribonucleotide-RNA + GMP + diphosphate + H(+). In terms of biological role, catalytic subunit of the tRNA-splicing ligase complex that acts by directly joining spliced tRNA halves to mature-sized tRNAs by incorporating the precursor-derived splice junction phosphate into the mature tRNA as a canonical 3',5'-phosphodiester. May act as an RNA ligase with broad substrate specificity, and may function toward other RNAs. The chain is RNA-splicing ligase RtcB homolog from Branchiostoma floridae (Florida lancelet).